Here is a 161-residue protein sequence, read N- to C-terminus: 6,7-dimethyl-8-ribityllumazine synthase (161 aa).

5-amino-6-(D-ribitylamino)uracil-binding positions include W26, 58-60 (SFE), and 81-83 (VVI). 86–87 (GT) lines the (2S)-2-hydroxy-3-oxobutyl phosphate pocket. Catalysis depends on H89, which acts as the Proton donor. Position 114 (F114) interacts with 5-amino-6-(D-ribitylamino)uracil. R128 serves as a coordination point for (2S)-2-hydroxy-3-oxobutyl phosphate.

The protein belongs to the DMRL synthase family.

It carries out the reaction (2S)-2-hydroxy-3-oxobutyl phosphate + 5-amino-6-(D-ribitylamino)uracil = 6,7-dimethyl-8-(1-D-ribityl)lumazine + phosphate + 2 H2O + H(+). It functions in the pathway cofactor biosynthesis; riboflavin biosynthesis; riboflavin from 2-hydroxy-3-oxobutyl phosphate and 5-amino-6-(D-ribitylamino)uracil: step 1/2. Functionally, catalyzes the formation of 6,7-dimethyl-8-ribityllumazine by condensation of 5-amino-6-(D-ribitylamino)uracil with 3,4-dihydroxy-2-butanone 4-phosphate. This is the penultimate step in the biosynthesis of riboflavin. In Streptomyces coelicolor (strain ATCC BAA-471 / A3(2) / M145), this protein is 6,7-dimethyl-8-ribityllumazine synthase.